Reading from the N-terminus, the 273-residue chain is Gamma-glutamyl cyclotransferase aclK (273 aa).

Belongs to the class-I pyridoxal-phosphate-dependent aminotransferase family.

It catalyses the reaction an alpha-(gamma-L-glutamyl)-L-amino acid = 5-oxo-L-proline + an L-alpha-amino acid. It participates in mycotoxin biosynthesis. Gamma-glutamyl cyclotransferase; part of the gene cluster that mediates the biosynthesis of aspirochlorine (or antibiotic A30641), an unusual halogenated spiro compound with distinctive antifungal properties due to selective inhibition of protein biosynthesis, and which is also active against bacteria, viruses, and murine tumor cells. The non-ribosomal peptide synthetase (NRPS) aclP is responsible the formation of the diketopiperazine (DKP) core from the condensation of 2 phenylalanine residues. One Phe residue is tailored into chlorotyrosine by hydroxylation and chlorination, whereas the second Phe undergoes an unprecedented C-C bond cleavage to be converted into glycine. After formation of the DKP, sulfur is incorporated into the DKP by conjugation with glutathione by aclG, followed by its stepwise degradation to the thiol by aclI, aclJ and aclK, and the dithiol oxidation by aclT. In addition, oxygenases (aclB, aclC, aclL and aclO) and O-methyltransferases (aclM and aclU) act as tailoring enzymes to produce the intermediate dechloroaspirochlorine. Ultimately, chlorination of dechloroaspirochlorine by the halogenase aclH is the last step in the aspirochlorine pathway. The protein is Gamma-glutamyl cyclotransferase aclK of Aspergillus oryzae (strain ATCC 42149 / RIB 40) (Yellow koji mold).